The following is a 357-amino-acid chain: RNA-binding protein 4B (357 aa).

2 RRM domains span residues 2–72 (VKLF…ASKN) and 78–148 (TKLH…LSTS). The CCHC-type zinc finger occupies 160-177 (SGCYRCGKEGHWSKECPV). Residues 196 to 357 (AVRTPYTMGY…YVDRTRYSAF (162 aa)) are interaction with TNPO3.

Interacts with TNPO3, which may mediate nuclear import of the protein. Expressed in the suprachiasmatic nucleus (SCN) (at protein level). Expressed in the suprachiasmatic nucleus (SCN).

The protein localises to the nucleus. It localises to the nucleolus. Functionally, required for the translational activation of PER1 mRNA in response to circadian clock. Binds directly to the 3'-UTR of the PER1 mRNA. In Mus musculus (Mouse), this protein is RNA-binding protein 4B (Rbm4b).